The primary structure comprises 219 residues: Protein-L-isoaspartate O-methyltransferase (219 aa).

Residue S66 is part of the active site.

This sequence belongs to the methyltransferase superfamily. L-isoaspartyl/D-aspartyl protein methyltransferase family.

It is found in the cytoplasm. The enzyme catalyses [protein]-L-isoaspartate + S-adenosyl-L-methionine = [protein]-L-isoaspartate alpha-methyl ester + S-adenosyl-L-homocysteine. In terms of biological role, catalyzes the methyl esterification of L-isoaspartyl residues in peptides and proteins that result from spontaneous decomposition of normal L-aspartyl and L-asparaginyl residues. It plays a role in the repair and/or degradation of damaged proteins. The protein is Protein-L-isoaspartate O-methyltransferase of Xanthobacter autotrophicus (strain ATCC BAA-1158 / Py2).